The sequence spans 123 residues: ATP synthase epsilon chain (123 aa).

The protein belongs to the ATPase epsilon chain family. As to quaternary structure, F-type ATPases have 2 components, CF(1) - the catalytic core - and CF(0) - the membrane proton channel. CF(1) has five subunits: alpha(3), beta(3), gamma(1), delta(1), epsilon(1). CF(0) has three main subunits: a, b and c.

It is found in the cell membrane. In terms of biological role, produces ATP from ADP in the presence of a proton gradient across the membrane. The protein is ATP synthase epsilon chain of Corynebacterium diphtheriae (strain ATCC 700971 / NCTC 13129 / Biotype gravis).